The primary structure comprises 268 residues: Interleukin-2 receptor subunit alpha (268 aa).

Residues 1–21 form the signal peptide; the sequence is MEPCLLMWGILTFITVSGYTT. A Sushi 1 domain is found at 22-81; sequence DLCDDDPPNLKHATFKALTYKTGTVLNCDCERGFRRISSYMHCTGNSSHASWENKCRCKS. At 22 to 237 the chain is on the extracellular side; it reads DLCDDDPPNL…ESFIFTTEYQ (216 aa). Intrachain disulfides connect Cys24/Cys64, Cys49/Cys77, and Cys51/Cys79. Asn67 carries N-linked (GlcNAc...) asparagine glycosylation. Residues 83-112 form a disordered region; that stretch reads SPENRKGKVTTKPEEQKGENPTEMQSQTPP. Residues 85–102 show a composition bias toward basic and acidic residues; that stretch reads ENRKGKVTTKPEEQKGEN. The region spanning 120 to 183 is the Sushi 2 domain; sequence GHCREPPPWE…WTQPPLKCIS (64 aa). 2 cysteine pairs are disulfide-bonded: Cys122–Cys165 and Cys149–Cys181. A disordered region spans residues 186–213; the sequence is QFPDDEELQASTDAPAGRDTSSPFITTS. Over residues 204–213 the composition is skewed to polar residues; it reads DTSSPFITTS. The helical transmembrane segment at 238–258 threads the bilayer; sequence IAVASCVLLLISIVLLSGLTW. The Cytoplasmic segment spans residues 259–268; that stretch reads QRRRRKSRTI.

In terms of assembly, non-covalent dimer of an alpha and a beta subunit. IL2R exists in 3 different forms: a high affinity dimer, an intermediate affinity monomer (beta subunit), and a low affinity monomer (alpha subunit). The high and intermediate affinity forms also associate with a gamma subunit.

It is found in the membrane. In terms of biological role, receptor for interleukin-2. The receptor is involved in the regulation of immune tolerance by controlling regulatory T cells (TREGs) activity. TREGs suppress the activation and expansion of autoreactive T-cells. The polypeptide is Interleukin-2 receptor subunit alpha (IL2RA) (Canis lupus familiaris (Dog)).